The sequence spans 416 residues: MSKRYLFTSESVTEGHPDKICDQISDTILDALLSQDDHSRVAAEVVVNTGLVLITGEITSKAQVHFVDLVRKKIAEIGYINADNGFSSNSCTVLVALDEQSPDISQGVTAAQENRELLSNDELDKIGAGDQGIVFGFACNETPEFMPLPISLAHRIARRLAAVRKTGELSYLRPDGKTQVSVIYEDGRPVGIDTILVSTQHDATIGDITDNDLVQQKIKSDLWEAVVQPVFSDLEIKPDANTRYLVNPTGKFVIGGPQGDAGLTGRKIIVDTYGGYSRHGGGAFSGKDPTKVDRSAAYACRYVAKNIVAAGLADKCEIQVGYAIGVARPVSLFVETFGTGKVADDVILDLINKYFELRPAGIIQTFNLRGLPSERGERFYQDVAAYGHFGRNDLDLPWEQTDKAAILKEALTSAVV.

Histidine 16 serves as a coordination point for ATP. Aspartate 18 serves as a coordination point for Mg(2+). Residue glutamate 44 coordinates K(+). Residues glutamate 57 and glutamine 100 each contribute to the L-methionine site. Residues 100–110 are flexible loop; it reads QSPDISQGVTA. ATP-binding positions include 175-177, 251-252, aspartate 260, 266-267, alanine 283, and lysine 287; these read DGK, KF, and RK. Aspartate 260 contributes to the L-methionine binding site. Lysine 291 contributes to the L-methionine binding site.

The protein belongs to the AdoMet synthase family. Homotetramer; dimer of dimers. It depends on Mg(2+) as a cofactor. The cofactor is K(+).

Its subcellular location is the cytoplasm. It carries out the reaction L-methionine + ATP + H2O = S-adenosyl-L-methionine + phosphate + diphosphate. Its pathway is amino-acid biosynthesis; S-adenosyl-L-methionine biosynthesis; S-adenosyl-L-methionine from L-methionine: step 1/1. Catalyzes the formation of S-adenosylmethionine (AdoMet) from methionine and ATP. The overall synthetic reaction is composed of two sequential steps, AdoMet formation and the subsequent tripolyphosphate hydrolysis which occurs prior to release of AdoMet from the enzyme. The protein is S-adenosylmethionine synthase of Microcystis aeruginosa (strain NIES-843 / IAM M-2473).